Reading from the N-terminus, the 532-residue chain is CTP synthase (532 aa).

The interval 1-268 (MTTKYIFVTG…DEIVCDHLNL (268 aa)) is amidoligase domain. A CTP-binding site is contributed by Ser-14. Ser-14 provides a ligand contact to UTP. 15–20 (SLGKGI) is a binding site for ATP. Tyr-55 contributes to the L-glutamine binding site. Asp-72 contributes to the ATP binding site. Positions 72 and 142 each coordinate Mg(2+). CTP-binding positions include 149–151 (DIE), 189–194 (KSKPTQ), and Lys-225. UTP contacts are provided by residues 189–194 (KSKPTQ) and Lys-225. 241–243 (RDA) contacts ATP. A Glutamine amidotransferase type-1 domain is found at 293–532 (KIALVGKYVA…REFIQASLRK (240 aa)). Gly-355 provides a ligand contact to L-glutamine. Cys-382 functions as the Nucleophile; for glutamine hydrolysis in the catalytic mechanism. Residues 383–386 (LGMQ), Glu-406, and Arg-463 each bind L-glutamine. Active-site residues include His-508 and Glu-510.

This sequence belongs to the CTP synthase family. In terms of assembly, homotetramer.

It catalyses the reaction UTP + L-glutamine + ATP + H2O = CTP + L-glutamate + ADP + phosphate + 2 H(+). The catalysed reaction is L-glutamine + H2O = L-glutamate + NH4(+). It carries out the reaction UTP + NH4(+) + ATP = CTP + ADP + phosphate + 2 H(+). Its pathway is pyrimidine metabolism; CTP biosynthesis via de novo pathway; CTP from UDP: step 2/2. With respect to regulation, allosterically activated by GTP, when glutamine is the substrate; GTP has no effect on the reaction when ammonia is the substrate. The allosteric effector GTP functions by stabilizing the protein conformation that binds the tetrahedral intermediate(s) formed during glutamine hydrolysis. Inhibited by the product CTP, via allosteric rather than competitive inhibition. In terms of biological role, catalyzes the ATP-dependent amination of UTP to CTP with either L-glutamine or ammonia as the source of nitrogen. Regulates intracellular CTP levels through interactions with the four ribonucleotide triphosphates. The polypeptide is CTP synthase (Halalkalibacterium halodurans (strain ATCC BAA-125 / DSM 18197 / FERM 7344 / JCM 9153 / C-125) (Bacillus halodurans)).